The primary structure comprises 398 residues: Trans-2-enoyl-CoA reductase [NADH] (398 aa).

Residues 47 to 52 (GASSGF), 74 to 75 (YE), 111 to 112 (DA), and 139 to 140 (LA) contribute to the NAD(+) site. Tyr-225 contacts substrate. Tyr-235 acts as the Proton donor in catalysis. NAD(+)-binding positions include Lys-244 and 274-276 (LVT).

This sequence belongs to the TER reductase family. As to quaternary structure, monomer.

It catalyses the reaction a 2,3-saturated acyl-CoA + NAD(+) = a (2E)-enoyl-CoA + NADH + H(+). Its pathway is lipid metabolism; fatty acid biosynthesis. Functionally, involved in the fatty acid synthesis (FAS II). Catalyzes the reduction of the carbon-carbon double bond of crotonyl-CoA to yield butyryl-CoA. The polypeptide is Trans-2-enoyl-CoA reductase [NADH] (Clostridium acetobutylicum (strain ATCC 824 / DSM 792 / JCM 1419 / IAM 19013 / LMG 5710 / NBRC 13948 / NRRL B-527 / VKM B-1787 / 2291 / W)).